Here is a 138-residue protein sequence, read N- to C-terminus: Basic phospholipase A2 PLA-N (138 aa).

The signal sequence occupies residues 1 to 16; that stretch reads MRTLWIMAVLLVGVEG. Intrachain disulfides connect cysteine 42–cysteine 131, cysteine 44–cysteine 60, cysteine 59–cysteine 111, cysteine 65–cysteine 138, cysteine 66–cysteine 104, cysteine 73–cysteine 97, and cysteine 91–cysteine 102. Ca(2+) contacts are provided by tyrosine 43, glycine 45, and glycine 47. Histidine 63 is an active-site residue. Aspartate 64 provides a ligand contact to Ca(2+). Aspartate 105 is an active-site residue.

This sequence belongs to the phospholipase A2 family. Group II subfamily. D49 sub-subfamily. It depends on Ca(2+) as a cofactor. Expressed by the venom gland.

Its subcellular location is the secreted. The catalysed reaction is a 1,2-diacyl-sn-glycero-3-phosphocholine + H2O = a 1-acyl-sn-glycero-3-phosphocholine + a fatty acid + H(+). Its function is as follows. Snake venom phospholipase A2 (PLA2) that displays edema-inducing activities, as well as presynaptic neurotoxicity and myotoxicity. PLA2 catalyzes the calcium-dependent hydrolysis of the 2-acyl groups in 3-sn-phosphoglycerides. The protein is Basic phospholipase A2 PLA-N of Protobothrops flavoviridis (Habu).